Reading from the N-terminus, the 435-residue chain is AP-2 complex subunit mu (435 aa).

One can recognise an MHD domain in the interval 170–434; it reads RNELFLDVLE…IGRSGIYETR (265 aa). Residues lysine 341, lysine 345, and lysine 354 each coordinate a 1,2-diacyl-sn-glycero-3-phospho-(1D-myo-inositol-3,4,5-trisphosphate).

The protein belongs to the adaptor complexes medium subunit family. As to quaternary structure, adaptor protein complex 2 (AP-2) is a heterotetramer composed of two large adaptins (alpha-type subunit and beta-type subunit), a medium adaptin (mu-type subunit) and a small adaptin (sigma-type subunit).

It is found in the cell membrane. The protein resides in the membrane. It localises to the coated pit. In terms of biological role, component of the adaptor complexes which link clathrin to receptors in coated vesicles. Clathrin-associated protein complexes are believed to interact with the cytoplasmic tails of membrane proteins, leading to their selection and concentration. AP50 is a subunit of the plasma membrane adaptor. The complex binds polyphosphoinositide-containing lipids. This is AP-2 complex subunit mu (ap2m1) from Xenopus tropicalis (Western clawed frog).